A 341-amino-acid polypeptide reads, in one-letter code: ATPase GET3 (341 aa).

34–41 (KGGVGKTT) lines the ATP pocket. Residue Asp-63 is part of the active site. ATP contacts are provided by Glu-245 and Asn-272. 2 residues coordinate Zn(2+): Cys-283 and Cys-286.

Belongs to the arsA ATPase family. Homodimer.

Its subcellular location is the cytoplasm. The protein localises to the endoplasmic reticulum. ATPase required for the post-translational delivery of tail-anchored (TA) proteins to the endoplasmic reticulum. Recognizes and selectively binds the transmembrane domain of TA proteins in the cytosol. This complex then targets to the endoplasmic reticulum by membrane-bound receptors, where the tail-anchored protein is released for insertion. This process is regulated by ATP binding and hydrolysis. ATP binding drives the homodimer towards the closed dimer state, facilitating recognition of newly synthesized TA membrane proteins. ATP hydrolysis is required for insertion. Subsequently, the homodimer reverts towards the open dimer state, lowering its affinity for the membrane-bound receptor, and returning it to the cytosol to initiate a new round of targeting. The sequence is that of ATPase GET3 from Ajellomyces capsulatus (strain G186AR / H82 / ATCC MYA-2454 / RMSCC 2432) (Darling's disease fungus).